A 357-amino-acid polypeptide reads, in one-letter code: Holliday junction branch migration complex subunit RuvB (357 aa).

Residues 4–195 are large ATPase domain (RuvB-L); that stretch reads TDKLAAKAVS…FGIVARLEFY (192 aa). ATP-binding positions include leucine 34, arginine 35, glycine 76, lysine 79, threonine 80, threonine 81, 142–144, arginine 185, tyrosine 195, and arginine 232; that span reads EDY. Residue threonine 80 coordinates Mg(2+). The segment at 196-266 is small ATPAse domain (RuvB-S); that stretch reads TPAELAKIVT…VADAALAMLD (71 aa). The head domain (RuvB-H) stretch occupies residues 269 to 357; sequence AVGFDLMDRK…PVRDLWDDNQ (89 aa). DNA-binding residues include arginine 305, arginine 324, and arginine 329.

This sequence belongs to the RuvB family. In terms of assembly, homohexamer. Forms an RuvA(8)-RuvB(12)-Holliday junction (HJ) complex. HJ DNA is sandwiched between 2 RuvA tetramers; dsDNA enters through RuvA and exits via RuvB. An RuvB hexamer assembles on each DNA strand where it exits the tetramer. Each RuvB hexamer is contacted by two RuvA subunits (via domain III) on 2 adjacent RuvB subunits; this complex drives branch migration. In the full resolvosome a probable DNA-RuvA(4)-RuvB(12)-RuvC(2) complex forms which resolves the HJ.

It localises to the cytoplasm. It carries out the reaction ATP + H2O = ADP + phosphate + H(+). The RuvA-RuvB-RuvC complex processes Holliday junction (HJ) DNA during genetic recombination and DNA repair, while the RuvA-RuvB complex plays an important role in the rescue of blocked DNA replication forks via replication fork reversal (RFR). RuvA specifically binds to HJ cruciform DNA, conferring on it an open structure. The RuvB hexamer acts as an ATP-dependent pump, pulling dsDNA into and through the RuvAB complex. RuvB forms 2 homohexamers on either side of HJ DNA bound by 1 or 2 RuvA tetramers; 4 subunits per hexamer contact DNA at a time. Coordinated motions by a converter formed by DNA-disengaged RuvB subunits stimulates ATP hydrolysis and nucleotide exchange. Immobilization of the converter enables RuvB to convert the ATP-contained energy into a lever motion, pulling 2 nucleotides of DNA out of the RuvA tetramer per ATP hydrolyzed, thus driving DNA branch migration. The RuvB motors rotate together with the DNA substrate, which together with the progressing nucleotide cycle form the mechanistic basis for DNA recombination by continuous HJ branch migration. Branch migration allows RuvC to scan DNA until it finds its consensus sequence, where it cleaves and resolves cruciform DNA. The sequence is that of Holliday junction branch migration complex subunit RuvB from Ralstonia pickettii (strain 12J).